The chain runs to 292 residues: ATP synthase gamma chain (292 aa).

It belongs to the ATPase gamma chain family. As to quaternary structure, F-type ATPases have 2 components, CF(1) - the catalytic core - and CF(0) - the membrane proton channel. CF(1) has five subunits: alpha(3), beta(3), gamma(1), delta(1), epsilon(1). CF(0) has three main subunits: a, b and c.

It is found in the cell inner membrane. Functionally, produces ATP from ADP in the presence of a proton gradient across the membrane. The gamma chain is believed to be important in regulating ATPase activity and the flow of protons through the CF(0) complex. In Hyphomonas neptunium (strain ATCC 15444), this protein is ATP synthase gamma chain.